The sequence spans 3799 residues: Polyketide synthase GfsE (3799 aa).

The Ketosynthase family 3 (KS3) 1 domain maps to 33–459; that stretch reads HEPIAIIGMS…GTNAHAILEE (427 aa). Module stretches follow at residues 33-1730 and 1749-3494; these read HEPI…RSSA and DEAI…RTDL. Active-site for beta-ketoacyl synthase 1 activity residues include C206, H341, and H381. The disordered stretch occupies residues 462 to 496; the sequence is AATGNPTEADTDQEPAASASPDRTTTLPAVPWPLS. Residues 582–895 form the Malonyl-CoA:ACP transacylase (MAT) 1 domain; sequence FVFPGQGSQW…LGEAHAHGAD (314 aa). Residues 944–1069 form an N-terminal hotdog fold 1 region; the sequence is HPLFGAVVEV…GVLELEARPE (126 aa). Residues 944–1222 form the PKS/mFAS DH 1 domain; it reads HPLFGAVVEV…SRPVAEEQLG (279 aa). The active-site Proton acceptor; for dehydratase activity 1 is the H976. The interval 1081 to 1222 is C-terminal hotdog fold 1; the sequence is AEVVPVEGLY…SRPVAEEQLG (142 aa). D1142 acts as the Proton donor; for dehydratase activity 1 in catalysis. The 173-residue stretch at 1382–1554 folds into the Ketoreductase (KR) 1 domain; the sequence is LLVTGASGVL…TSLSWGLWAE (173 aa). The Carrier 1 domain maps to 1652-1730; the sequence is EAERAVLELV…ALATHIRSSA (79 aa). S1690 bears the O-(pantetheine 4'-phosphoryl)serine mark. Residues 1749 to 2174 enclose the Ketosynthase family 3 (KS3) 2 domain; the sequence is DEAIAIVGMA…GTNAHVILEQ (426 aa). Catalysis depends on for beta-ketoacyl synthase 2 activity residues C1921, H2056, and H2096. Positions 2284–2604 constitute a Malonyl-CoA:ACP transacylase (MAT) 2 domain; the sequence is FVFPGQGSQW…VSLAKVHTHG (321 aa). The interval 2656-2781 is N-terminal hotdog fold 2; it reads HPLLTGVVDL…GTLAVDADHD (126 aa). A PKS/mFAS DH 2 domain is found at 2656–2936; that stretch reads HPLLTGVVDL…TRPVTAAQFA (281 aa). H2688 serves as the catalytic Proton acceptor; for dehydratase activity 2. Residues 2794–2936 form a C-terminal hotdog fold 2 region; sequence ADPVDLTEVY…TRPVTAAQFA (143 aa). D2855 functions as the Proton donor; for dehydratase activity 2 in the catalytic mechanism. A Ketoreductase (KR) 2 domain is found at 3142 to 3314; that stretch reads LLVTGASGVL…TALSWGLWAE (173 aa). Positions 3419-3494 constitute a Carrier 2 domain; it reads AALLDLVGAQ…ALAAQLRTDL (76 aa). S3454 is modified (O-(pantetheine 4'-phosphoryl)serine).

Pantetheine 4'-phosphate is required as a cofactor.

It functions in the pathway antibiotic biosynthesis. Fifth protein in the synthesis of the 16-membered macrolide antibiotics FD-891 and FD-892. Composed of 2 modules. Modifies the product of GfsD by multiple rounds of addition of methylmalonyl-CoA and other modifications to help generate the final products. This Streptomyces halstedii protein is Polyketide synthase GfsE.